A 342-amino-acid chain; its full sequence is Adenylate isopentenyltransferase 6, chloroplastic (342 aa).

The transit peptide at 1–33 (MQQLMTLLSPPLSHSSLLPTVTTKFGSPRLVTT) directs the protein to the chloroplast. Residue 52-59 (GTTGTGKS) coordinates ATP.

It belongs to the IPP transferase family. Expressed in siliques, at the mRNA level.

Its subcellular location is the plastid. The protein resides in the chloroplast. It carries out the reaction dimethylallyl diphosphate + ADP = N(6)-(dimethylallyl)adenosine 5'-diphosphate + diphosphate. It catalyses the reaction dimethylallyl diphosphate + ATP = N(6)-(dimethylallyl)adenosine 5'-triphosphate + diphosphate. Functionally, involved in cytokinin biosynthesis. Catalyzes the transfer of an isopentenyl group from dimethylallyl diphosphate (DMAPP) to ATP and ADP. This chain is Adenylate isopentenyltransferase 6, chloroplastic (IPT6), found in Arabidopsis thaliana (Mouse-ear cress).